The primary structure comprises 1015 residues: PHD finger protein 20-like protein 1 (1015 aa).

Positions 11–71 (ITFEIGARLE…SNRLRPLERP (61 aa)) constitute a Tudor 1 domain. Residues K75 and K79 each participate in a glycyl lysine isopeptide (Lys-Gly) (interchain with G-Cter in SUMO2) cross-link. One can recognise a Tudor 2 domain in the interval 85–141 (FDFKAGEEVLARWTDCRYYPAKIEAINKEGTFTVQFYDGVIRCLKRMHIKAMPEDAK). Disordered regions lie at residues 183–206 (AKNK…RDGG) and 309–367 (EQAI…KAPK). 2 stretches are compositionally biased toward polar residues: residues 186–197 (KTGSKPRTSANS) and 315–346 (KPQS…SSGK). S368 carries the post-translational modification Phosphoserine. Disordered regions lie at residues 389–455 (VINK…SSVP) and 478–513 (CGSE…NPTS). Over residues 404 to 415 (PCKHSERRRRSQ) the composition is skewed to basic residues. Position 432 is a phosphoserine (S432). Polar residues-rich tracts occupy residues 443–453 (SISSQNQQESS) and 480–489 (SEVTGSQAPD). K530 participates in a covalent cross-link: Glycyl lysine isopeptide (Lys-Gly) (interchain with G-Cter in SUMO2). A compositionally biased stretch (basic and acidic residues) spans 539–565 (EKTSTAFGKRKEKDKERKEKRDKDHYK). The interval 539–585 (EKTSTAFGKRKEKDKERKEKRDKDHYKPKQKKKKKKKKKSKQHDYSD) is disordered. Residues 566–579 (PKQKKKKKKKKKSK) are compositionally biased toward basic residues. The PHD-type zinc finger occupies 681 to 729 (IVRCICELDEENGFMIQCEECLCWQHSVCMGLLEDSIPEQYICYICRDP). Residue K849 forms a Glycyl lysine isopeptide (Lys-Gly) (interchain with G-Cter in SUMO2) linkage. Residues 859–878 (HSYQKPQSFSQDCHSLTDPG) show a composition bias toward polar residues. Positions 859-889 (HSYQKPQSFSQDCHSLTDPGSSDDDDVSSFE) are disordered. Acidic residues predominate over residues 879-889 (SSDDDDVSSFE). K907 bears the N6-acetyllysine mark.

In terms of assembly, interacts with methylated DNMT1 (DNMT1K142me1). Interacts with SOX2.

It localises to the nucleus. In terms of biological role, is a negative regulator of proteasomal degradation of a set of methylated proteins, including DNMT1 and SOX2. Involved in the maintainance of embryonic stem cells pluripotency, through the regulation of SOX2 levels. This chain is PHD finger protein 20-like protein 1 (Phf20l1), found in Rattus norvegicus (Rat).